We begin with the raw amino-acid sequence, 368 residues long: MHESLDKRLEGLLTGLALAGRSLDLEGKRQELSILEEQTLKEDFWQDVTSAGKVSERIVSLKRQIAHYEEFKVRVENLAFFLNDGDVSADPELREDLEKEFTICEHILSEWETQRLLSGEVDKNPCFLTINAGAGGTESCDWVEMLFRMYCRWAAQHQWKVEVIDRQEGDVAGIKHVTVKFSGDYAYGYAKAERGVHRLVRISPFDSNAKRHTSFASVDVYPEIDDEIEIDIRPNDLRIDTFRSSGAGGQHVNVTDSAVRITHIPTGIMVSCQRERSQIQNRESCMKMLRARMYQQILQERLEKQLLDRKNKKEIAWGSQIRNYVFQPYTLVKDVRTGHETGNVQAMMDGELLDDFVKAYLAEYGEIS.

The residue at position 250 (Gln-250) is an N5-methylglutamine.

This sequence belongs to the prokaryotic/mitochondrial release factor family. Methylated by PrmC. Methylation increases the termination efficiency of RF2.

The protein localises to the cytoplasm. In terms of biological role, peptide chain release factor 2 directs the termination of translation in response to the peptide chain termination codons UGA and UAA. This Chlamydia abortus (strain DSM 27085 / S26/3) (Chlamydophila abortus) protein is Peptide chain release factor 2.